The following is a 151-amino-acid chain: Transcriptional repressor NrdR (151 aa).

The segment at 3–34 (CPFCNSVDTSVKNSRPSDCKMSVRRRRSCDSC) is a zinc-finger region. The 91-residue stretch at 49-139 (VKVLKKDGSV…VYMNFSDVND (91 aa)) folds into the ATP-cone domain.

The protein belongs to the NrdR family. Requires Zn(2+) as cofactor.

Negatively regulates transcription of bacterial ribonucleotide reductase nrd genes and operons by binding to NrdR-boxes. The protein is Transcriptional repressor NrdR of Anaplasma marginale (strain Florida).